Consider the following 283-residue polypeptide: tRNA pseudouridine synthase B (283 aa).

The active-site Nucleophile is aspartate 38.

It belongs to the pseudouridine synthase TruB family. Type 1 subfamily.

It catalyses the reaction uridine(55) in tRNA = pseudouridine(55) in tRNA. In terms of biological role, responsible for synthesis of pseudouridine from uracil-55 in the psi GC loop of transfer RNAs. The chain is tRNA pseudouridine synthase B from Aster yellows witches'-broom phytoplasma (strain AYWB).